A 397-amino-acid chain; its full sequence is F-box protein At5g25290 (397 aa).

In terms of domain architecture, F-box spans 11-56 (VTLWSEIPMDILRSVFERLSFVDLHRAKIVCSHWYSCSKQSFLRKT).

This chain is F-box protein At5g25290, found in Arabidopsis thaliana (Mouse-ear cress).